The chain runs to 303 residues: Oxygen-dependent coproporphyrinogen-III oxidase (303 aa).

Residue Ser-93 coordinates substrate. 2 residues coordinate a divalent metal cation: His-97 and His-107. Residue His-107 is the Proton donor of the active site. Position 109–111 (109–111) interacts with substrate; sequence NVR. 2 residues coordinate a divalent metal cation: His-146 and His-176. The segment at 241–276 is important for dimerization; the sequence is YVEFNLVYDRGTLFGLQSGGRTESILMSLPPQVRWG. 259–261 contacts substrate; it reads GGR.

The protein belongs to the aerobic coproporphyrinogen-III oxidase family. Homodimer. A divalent metal cation is required as a cofactor.

Its subcellular location is the cytoplasm. The catalysed reaction is coproporphyrinogen III + O2 + 2 H(+) = protoporphyrinogen IX + 2 CO2 + 2 H2O. It participates in porphyrin-containing compound metabolism; protoporphyrin-IX biosynthesis; protoporphyrinogen-IX from coproporphyrinogen-III (O2 route): step 1/1. Its function is as follows. Involved in the heme biosynthesis. Catalyzes the aerobic oxidative decarboxylation of propionate groups of rings A and B of coproporphyrinogen-III to yield the vinyl groups in protoporphyrinogen-IX. The polypeptide is Oxygen-dependent coproporphyrinogen-III oxidase (Pseudomonas putida (strain ATCC 47054 / DSM 6125 / CFBP 8728 / NCIMB 11950 / KT2440)).